The sequence spans 321 residues: Aspartate carbamoyltransferase catalytic subunit (321 aa).

2 residues coordinate carbamoyl phosphate: R64 and T65. K92 provides a ligand contact to L-aspartate. Residues R114, H144, and Q147 each coordinate carbamoyl phosphate. Positions 177 and 232 each coordinate L-aspartate. Residues G273 and P274 each coordinate carbamoyl phosphate.

It belongs to the aspartate/ornithine carbamoyltransferase superfamily. ATCase family. As to quaternary structure, heterododecamer (2C3:3R2) of six catalytic PyrB chains organized as two trimers (C3), and six regulatory PyrI chains organized as three dimers (R2).

It catalyses the reaction carbamoyl phosphate + L-aspartate = N-carbamoyl-L-aspartate + phosphate + H(+). It participates in pyrimidine metabolism; UMP biosynthesis via de novo pathway; (S)-dihydroorotate from bicarbonate: step 2/3. Catalyzes the condensation of carbamoyl phosphate and aspartate to form carbamoyl aspartate and inorganic phosphate, the committed step in the de novo pyrimidine nucleotide biosynthesis pathway. The chain is Aspartate carbamoyltransferase catalytic subunit from Alkalilimnicola ehrlichii (strain ATCC BAA-1101 / DSM 17681 / MLHE-1).